A 388-amino-acid chain; its full sequence is Staphopain A (388 aa).

A signal peptide spans 1–25 (MKRNFPKLIALSLIFSLSVTPIANA). Positions 26–214 (ESNSNIKAKD…TSQFKSNNYT (189 aa)) are excised as a propeptide. Catalysis depends on residues Cys-238, His-334, and Asn-355.

This sequence belongs to the peptidase C47 family. In terms of assembly, in the cytoplasm, prematurely activated/folded ScpA forms a stable non-covalent complex with ScpB. Cleavage leads to the activation of ScpA probably by an auto-catalytic manner.

It localises to the secreted. It catalyses the reaction Broad endopeptidase action on proteins including elastin, but rather limited hydrolysis of small-molecule substrates. Assays are conveniently made with hemoglobin, casein or Z-Phe-Arg-NHMec as substrate.. Prematurely activated/folded staphopain A is inhibited by staphostatin A (ScpB), which is probably required to protect staphylococcal cytoplasmic proteins from degradation by ScpA. In terms of biological role, cysteine protease that plays an important role in the inhibition of host innate immune response. Cleaves host elastins found in connective tissues, pulmonary surfactant protein A in the lungs, and the chemokine receptor CXCR2 on leukocytes. Proteolytic cleavage of surfactant protein A impairs bacterial phagocytosis by neutrophils while CXCR2 degradation blocks neutrophil activation and chemotaxis. Additionally, promotes vascular leakage by activating the plasma kallikerin/kinin system, resulting in hypotension. The protein is Staphopain A (sspP) of Staphylococcus aureus (strain COL).